Here is a 365-residue protein sequence, read N- to C-terminus: MHVTTIFDTVPVNGASPYEVVIGSGLTPLIAERAAGSGATQVALLHQPALAEVAADIDGALQAAGLQVLHLEVPDAESGKTLAVAGECWDKLGAAAFGRRDIIIGLGGGAATDLAGFVAAAWMRGVRVIQVPTTVLGMVDAAVGGKTGINTAAGKNLVGAFHEPDAVFIDLDRLHTLPDEEIIAGSAEIIKTGFIADEEILRLYESDASACLQREIDGSHLPELIARSVRVKGSVVSADLKESNLREILNYGHTFAHAVELREDFQWRHGNAVAVGMMFIANLSYNLGLIDADLLERHRVILDSIGLPTTYQGGVFDELYEGMTRDKKNRDGNIRFVALTAVGEVTRIEGPDRGELIRAYEAISS.

NAD(+)-binding positions include 75–80 (DAESGK), 109–113 (GAATD), 133–134 (TT), Lys146, and Lys155. Residues Glu188, His253, and His269 each contribute to the Zn(2+) site.

It belongs to the sugar phosphate cyclases superfamily. Dehydroquinate synthase family. The cofactor is NAD(+). It depends on Co(2+) as a cofactor. Zn(2+) is required as a cofactor.

The protein localises to the cytoplasm. The enzyme catalyses 7-phospho-2-dehydro-3-deoxy-D-arabino-heptonate = 3-dehydroquinate + phosphate. The protein operates within metabolic intermediate biosynthesis; chorismate biosynthesis; chorismate from D-erythrose 4-phosphate and phosphoenolpyruvate: step 2/7. Catalyzes the conversion of 3-deoxy-D-arabino-heptulosonate 7-phosphate (DAHP) to dehydroquinate (DHQ). This Corynebacterium efficiens (strain DSM 44549 / YS-314 / AJ 12310 / JCM 11189 / NBRC 100395) protein is 3-dehydroquinate synthase.